Consider the following 223-residue polypeptide: Probable cytokinin riboside 5'-monophosphate phosphoribohydrolase LOGL1 (223 aa).

Substrate is bound by residues Glu89, 107–108 (RK), 124–130 (GYGTMEE), and Thr136. The segment at 201–223 (QEVAPRTSWEMSELGYGKTPEES) is disordered.

This sequence belongs to the LOG family. In terms of tissue distribution, expressed in shoot apex, immature inflorescences and flowers.

The enzyme catalyses N(6)-(dimethylallyl)adenosine 5'-phosphate + H2O = N(6)-dimethylallyladenine + D-ribose 5-phosphate. It carries out the reaction 9-ribosyl-trans-zeatin 5'-phosphate + H2O = trans-zeatin + D-ribose 5-phosphate. Cytokinin-activating enzyme working in the direct activation pathway. Phosphoribohydrolase that converts inactive cytokinin nucleotides to the biologically active free-base forms. In Oryza sativa subsp. japonica (Rice), this protein is Probable cytokinin riboside 5'-monophosphate phosphoribohydrolase LOGL1 (LOGL1).